Consider the following 274-residue polypeptide: tRNA (cytosine(48)-C(5))-methyltransferase (274 aa).

S-adenosyl-L-methionine-binding positions include 91-97 (CAAPGGK), E115, R120, D142, D163, N169, and R189. C212 serves as the catalytic Nucleophile.

Belongs to the class I-like SAM-binding methyltransferase superfamily. RsmB/NOP family.

It localises to the cytoplasm. It catalyses the reaction cytidine(48) in tRNA precursor + S-adenosyl-L-methionine = 5-methylcytidine(48) in tRNA precursor + S-adenosyl-L-homocysteine + H(+). The catalysed reaction is cytidine(40) in tRNA precursor + S-adenosyl-L-methionine = 5-methylcytidine(40) in tRNA precursor + S-adenosyl-L-homocysteine + H(+). Catalyzes AdoMet-dependent formation of m5C in tRNA. Cytidine residue at either position 40 or position 48 is likely to be methylated. The sequence is that of tRNA (cytosine(48)-C(5))-methyltransferase (trm4) from Methanocaldococcus jannaschii (strain ATCC 43067 / DSM 2661 / JAL-1 / JCM 10045 / NBRC 100440) (Methanococcus jannaschii).